Consider the following 535-residue polypeptide: Phosphoenolpyruvate carboxykinase (ATP) (535 aa).

Substrate contacts are provided by R59, Y201, and K207. ATP is bound by residues K207, H226, and 243-251; that span reads GLSGTGKTT. Mn(2+) is bound by residues K207 and H226. D264 serves as a coordination point for Mn(2+). ATP-binding positions include E292, R328, 444-445, and T450; that span reads RI. R328 provides a ligand contact to substrate.

Belongs to the phosphoenolpyruvate carboxykinase (ATP) family. Mn(2+) is required as a cofactor.

It localises to the cytoplasm. The catalysed reaction is oxaloacetate + ATP = phosphoenolpyruvate + ADP + CO2. Its pathway is carbohydrate biosynthesis; gluconeogenesis. In terms of biological role, involved in the gluconeogenesis. Catalyzes the conversion of oxaloacetate (OAA) to phosphoenolpyruvate (PEP) through direct phosphoryl transfer between the nucleoside triphosphate and OAA. This is Phosphoenolpyruvate carboxykinase (ATP) from Porphyromonas gingivalis (strain ATCC 33277 / DSM 20709 / CIP 103683 / JCM 12257 / NCTC 11834 / 2561).